Reading from the N-terminus, the 76-residue chain is NADH dehydrogenase [ubiquinone] 1 subunit C1, mitochondrial (76 aa).

Residues 1–27 constitute a mitochondrion transit peptide; that stretch reads MAPSALLRPLSRLLAPARLPSGPSVRS. The helical transmembrane segment at 41-59 threads the bilayer; it reads WLKVGFTLGTTVFLWIYLI.

The protein belongs to the complex I NDUFC1 subunit family. As to quaternary structure, complex I is composed of 45 different subunits.

Its subcellular location is the mitochondrion inner membrane. Its function is as follows. Accessory subunit of the mitochondrial membrane respiratory chain NADH dehydrogenase (Complex I), that is believed not to be involved in catalysis. Complex I functions in the transfer of electrons from NADH to the respiratory chain. The immediate electron acceptor for the enzyme is believed to be ubiquinone. In Homo sapiens (Human), this protein is NADH dehydrogenase [ubiquinone] 1 subunit C1, mitochondrial (NDUFC1).